Consider the following 471-residue polypeptide: MELGRTRNVHIVGIGGAGMSAIAELLLKSGFSVSGSDLASGEVIDKLRELGAVVWQGHEAEHVGMSDVVVYSSAVRPESNVEIQAAEKQGIPVIKRDEMLGELMRYKVGICVSGTHGKTTTTAMIATMLLESGQSPTVMIGGVSDYLKGSTVVGEGRHMVIEADEYDRAFLKLTPTIAVVNSLESEHMDTYGTMDNLRDSFAAFANKVPFYGRVICCVDWPEIRSLISRLNRRYTTFGIEEPADVMASDLEACEGGSVFTVEAFGESYPGVRLGVPGRHNVLNALAAFSVGLEIGLPPEKIIAGLGAYTGMRRRFQMKFKGGNGLLVVDDYAHHPSEVKATVKAARHGWKEHRIVAVFQPHLYSRTSEFAVEFGWALSRADAIYVAGIYPSRERTEDFPGVTGELVAEAARKAGAKEVTFEPDSEQLLDSLRQEAGPDTLILFMGAGDITHLATRFASMCADEGTATGAAG.

Residue 114–120 coordinates ATP; sequence GTHGKTT.

This sequence belongs to the MurCDEF family.

It is found in the cytoplasm. The catalysed reaction is UDP-N-acetyl-alpha-D-muramate + L-alanine + ATP = UDP-N-acetyl-alpha-D-muramoyl-L-alanine + ADP + phosphate + H(+). It participates in cell wall biogenesis; peptidoglycan biosynthesis. Cell wall formation. This Chlorobaculum parvum (strain DSM 263 / NCIMB 8327) (Chlorobium vibrioforme subsp. thiosulfatophilum) protein is UDP-N-acetylmuramate--L-alanine ligase.